Here is a 440-residue protein sequence, read N- to C-terminus: T-box transcription factor T homolog 2 (440 aa).

The segment at residues 44-215 (LWEKFKSLTN…HNPFAKAFLD (172 aa)) is a DNA-binding region (T-box). Disordered stretches follow at residues 282 to 303 (APYP…DTAA) and 393 to 440 (TTAS…MPSM). A compositionally biased stretch (polar residues) spans 409 to 440 (STDSGYGHSTTPPAPQTRITSNNWSPMTMPSM).

In terms of tissue distribution, mesoderm and notochord.

It is found in the nucleus. Involved in the transcriptional regulation of genes required for mesoderm formation and differentiation. The chain is T-box transcription factor T homolog 2 from Branchiostoma floridae (Florida lancelet).